The chain runs to 320 residues: Dual oxidase maturation factor 2 (320 aa).

A helical membrane pass occupies residues 22 to 42 (VPLLIVILVFLSLAASFLFIL). The Cytoplasmic segment spans residues 43 to 51 (PGIRGHSRW). The chain crosses the membrane as a helical span at residues 52–72 (FWLVRVLLSLFIGAEIVAVHF). At 73 to 183 (SGDWFVGRVW…HLAGHYAAAT (111 aa)) the chain is on the extracellular side. Asn-84, Asn-109, and Asn-121 each carry an N-linked (GlcNAc...) asparagine glycan. A helical membrane pass occupies residues 184–204 (LWVAFCFWIIANALLSMPAPL). Residues 205-206 (YG) are Cytoplasmic-facing. A helical transmembrane segment spans residues 207 to 227 (GLALLTTGAFTLFGVFAFASI). Residues 228 to 249 (SSVPLCHFRLGSAVLTPYYGAS) are Extracellular-facing. The chain crosses the membrane as a helical span at residues 250–270 (FWLTLATGILSLLLGGAVVIL). At 271–320 (HYTRPSALRSFLDLSVKDCSNQAKGNSPLTLNNPQHEQLKSPDLNITTLL) the chain is on the cytoplasmic side.

It belongs to the DUOXA family. Heterodimer with DUXA2; disulfide-linked. Interacts with CSNK1G2. N-glycosylated.

It localises to the endoplasmic reticulum membrane. Required for the maturation and the transport from the endoplasmic reticulum to the plasma membrane of functional DUOX2. May play a role in thyroid hormone synthesis. The polypeptide is Dual oxidase maturation factor 2 (Duoxa2) (Mus musculus (Mouse)).